A 228-amino-acid chain; its full sequence is 7-cyano-7-deazaguanine synthase (228 aa).

Residue 9–19 (LSGGPDSTTVL) coordinates ATP. Residues Cys-193, Cys-203, Cys-206, and Cys-209 each contribute to the Zn(2+) site.

This sequence belongs to the QueC family. The cofactor is Zn(2+).

It catalyses the reaction 7-carboxy-7-deazaguanine + NH4(+) + ATP = 7-cyano-7-deazaguanine + ADP + phosphate + H2O + H(+). Its pathway is purine metabolism; 7-cyano-7-deazaguanine biosynthesis. Catalyzes the ATP-dependent conversion of 7-carboxy-7-deazaguanine (CDG) to 7-cyano-7-deazaguanine (preQ(0)). The sequence is that of 7-cyano-7-deazaguanine synthase from Rickettsia massiliae (strain Mtu5).